Reading from the N-terminus, the 266-residue chain is Putative carbamate hydrolase RutD (266 aa).

Residues 14-115 (PVVVLISGLG…TMLVSVNGWL (102 aa)) form the AB hydrolase-1 domain.

It belongs to the AB hydrolase superfamily. Hydrolase RutD family.

The enzyme catalyses carbamate + 2 H(+) = NH4(+) + CO2. In terms of biological role, involved in pyrimidine catabolism. May facilitate the hydrolysis of carbamate, a reaction that can also occur spontaneously. The sequence is that of Putative carbamate hydrolase RutD from Shigella flexneri serotype X (strain 2002017).